The chain runs to 73 residues: Large ribosomal subunit protein bL31 (73 aa).

This sequence belongs to the bacterial ribosomal protein bL31 family. Type A subfamily. As to quaternary structure, part of the 50S ribosomal subunit.

Binds the 23S rRNA. This is Large ribosomal subunit protein bL31 from Synechococcus sp. (strain JA-3-3Ab) (Cyanobacteria bacterium Yellowstone A-Prime).